A 523-amino-acid polypeptide reads, in one-letter code: MAVCARLCGVGQSGGCRRRRQRKGAGNDPELEDEEEEDEVRIEAEVLVEGQAAVAPLRPRSLLQLPPEILVEIFSSLPGTELPSLAQVCRKFRQILTTDTIWKRRCKQEYGVCENLRKLEVTGVSCHDVYVKLLHQYRHILGLWQPDIGPYGGLLNVVVDGLFIIGWMYLPPHDPHVDEGMRLKPVFRIHLMERNNATVECMYGHKGPHNGQIQIVKKDEFSTKCLQTDYHRMSGGRQEEFRTWLREDLGRTLEDIFHEHMQELILMKFIYICQYDKCLTYRRIYHPPNRPDDLLNPGFFKGTYGSHGLEIVMFSFHGTIAKATKITGDPNVPAGQQTLEVDLTRPVQLPDVEHLRNFDEISRLILDVQSQIQREQRQTGNEEDDGKGAGPDRAEHSQQPAPVHRPAKEDVNGVDNADDREQKPPNVQSFVLPAGVMARNEEYPRSCKMCFYGTGLIAGHGFSSPERTPGLFILFDEDRFGFIWLELKSFSLYSRMRDRFQHSEAPSLEAFDEMLQHMQSWTT.

The F-box domain maps to 59-105 (PRSLLQLPPEILVEIFSSLPGTELPSLAQVCRKFRQILTTDTIWKRR). Zn(2+)-binding residues include Cys201, His209, Cys225, and His231. Residues 372–427 (IQREQRQTGNEEDDGKGAGPDRAEHSQQPAPVHRPAKEDVNGVDNADDREQKPPNV) are disordered. Basic and acidic residues-rich tracts occupy residues 386–396 (GKGAGPDRAEH) and 406–423 (PAKE…REQK).

This sequence belongs to the FBXO31 family. In terms of assembly, part of a SCF (SKP1-cullin-F-box) protein ligase complex SCF(FBXO31).

The protein resides in the cytoplasm. The protein operates within protein modification; protein ubiquitination. Functionally, substrate-recognition component of the SCF(FBXO31) protein ligase complex, which specifically mediates the ubiquitination of proteins amidated at their C-terminus in response to oxidative stress, leading to their degradation by the proteasome. Fbxo31 specifically recognizes and binds C-terminal peptides bearing an amide: C-terminal amidation in response to oxidative stress takes place following protein fragmentation. The SCF(FBXO31) also plays a role in G1 arrest following DNA damage by mediating ubiquitination of phosphorylated cyclin-D1 (ccnd1), promoting its degradation by the proteasome, resulting in G1 arrest. The SCF(FBXO31) complex is however not a major regulator of ccnd1 stability during the G1/S transition. This is F-box only protein 31-B (fbxo31-b) from Xenopus laevis (African clawed frog).